Consider the following 911-residue polypeptide: Protein translocase subunit SecA (911 aa).

ATP-binding positions include Gln87, 105–109, and Asp512; that span reads GEGKT. Over residues 561 to 571 the composition is skewed to basic and acidic residues; sequence RHESRRIDNQL. Residues 561–583 are disordered; that stretch reads RHESRRIDNQLRGRSGRQGDPGS. Residues Cys895, Cys897, Cys906, and His907 each coordinate Zn(2+).

This sequence belongs to the SecA family. In terms of assembly, monomer and homodimer. Part of the essential Sec protein translocation apparatus which comprises SecA, SecYEG and auxiliary proteins SecDF-YajC and YidC. Requires Zn(2+) as cofactor.

The protein localises to the cell inner membrane. The protein resides in the cytoplasm. The enzyme catalyses ATP + H2O + cellular proteinSide 1 = ADP + phosphate + cellular proteinSide 2.. Its function is as follows. Part of the Sec protein translocase complex. Interacts with the SecYEG preprotein conducting channel. Has a central role in coupling the hydrolysis of ATP to the transfer of proteins into and across the cell membrane, serving both as a receptor for the preprotein-SecB complex and as an ATP-driven molecular motor driving the stepwise translocation of polypeptide chains across the membrane. In Pseudomonas putida (strain W619), this protein is Protein translocase subunit SecA.